The sequence spans 432 residues: 3-chlorobenzoate-3,4-dioxygenase oxygenase subunit (432 aa).

Residues 27–133 (WIPALKSTEL…VKEMAGVVWV (107 aa)) form the Rieske domain. Positions 69, 71, 88, and 91 each coordinate [2Fe-2S] cluster. Fe cation contacts are provided by H180 and H185.

Belongs to the bacterial ring-hydroxylating dioxygenase alpha subunit family. This dioxygenase system consists of two proteins: an oxygenase and an oxygenase reductase. Requires [2Fe-2S] cluster as cofactor. Fe cation serves as cofactor.

This is 3-chlorobenzoate-3,4-dioxygenase oxygenase subunit (cbaA) from Comamonas testosteroni (Pseudomonas testosteroni).